The primary structure comprises 233 residues: 7-cyano-7-deazaguanine synthase (233 aa).

ATP is bound at residue 11–21 (LSGGLDSSTVL). Residues Cys-195, Cys-203, Cys-206, and Cys-209 each coordinate Zn(2+).

The protein belongs to the QueC family. Zn(2+) is required as a cofactor.

The catalysed reaction is 7-carboxy-7-deazaguanine + NH4(+) + ATP = 7-cyano-7-deazaguanine + ADP + phosphate + H2O + H(+). It functions in the pathway purine metabolism; 7-cyano-7-deazaguanine biosynthesis. Catalyzes the ATP-dependent conversion of 7-carboxy-7-deazaguanine (CDG) to 7-cyano-7-deazaguanine (preQ(0)). The protein is 7-cyano-7-deazaguanine synthase of Thermosynechococcus vestitus (strain NIES-2133 / IAM M-273 / BP-1).